The following is a 209-amino-acid chain: Small ribosomal subunit protein uS3 (209 aa).

Positions 38 to 107 constitute a KH type-2 domain; it reads IRKFIKNKYY…RVVINIEEIK (70 aa).

Belongs to the universal ribosomal protein uS3 family. Part of the 30S ribosomal subunit. Forms a tight complex with proteins S10 and S14.

Functionally, binds the lower part of the 30S subunit head. Binds mRNA in the 70S ribosome, positioning it for translation. This is Small ribosomal subunit protein uS3 from Thermotoga sp. (strain RQ2).